We begin with the raw amino-acid sequence, 411 residues long: 4-coumarate--CoA ligase (411 aa).

It belongs to the ATP-dependent AMP-binding enzyme family.

The enzyme catalyses (E)-4-coumarate + ATP + CoA = (E)-4-coumaroyl-CoA + AMP + diphosphate. Functionally, converts p-coumaric acid into p-coumaryl CoA. This is necessary for the activation of the photoactive yellow protein (PYP) chromophore. The protein is 4-coumarate--CoA ligase (pcl) of Cereibacter sphaeroides (strain ATCC 17023 / DSM 158 / JCM 6121 / CCUG 31486 / LMG 2827 / NBRC 12203 / NCIMB 8253 / ATH 2.4.1.) (Rhodobacter sphaeroides).